The following is a 724-amino-acid chain: Transcription factor dcp-66 (724 aa).

Composition is skewed to polar residues over residues M1–M12 and G56–P70. Disordered regions lie at residues M1 to L23 and N55 to L129. The span at A85–I95 shows a compositional bias: basic and acidic residues. The segment covering D105–N119 has biased composition (acidic residues). The stretch at E186–M216 forms a coiled coil. 2 disordered regions span residues K328–Q361 and A523–Q590. Residues A332–Q358 show a composition bias toward low complexity. Polar residues-rich tracts occupy residues T527–S541 and I551–V564. Over residues K565–Q590 the composition is skewed to low complexity.

Expressed at low levels in excretory cell, pharynx, vulva, and posterior neurons in adults. Strongly expressed in the excretory cell and more weakly in the pharynx in larva. Embryonic expression in the excretory cell.

Its subcellular location is the nucleus. Functionally, transcription factor which binds to the 5'-CCATACATTA-3' motif found in the promoter region of pgp-12 and activates its expression in the excretory cell. In Caenorhabditis elegans, this protein is Transcription factor dcp-66.